The sequence spans 138 residues: Large ribosomal subunit protein uL16 (138 aa).

Belongs to the universal ribosomal protein uL16 family. Part of the 50S ribosomal subunit.

Its function is as follows. Binds 23S rRNA and is also seen to make contacts with the A and possibly P site tRNAs. This Neisseria gonorrhoeae (strain ATCC 700825 / FA 1090) protein is Large ribosomal subunit protein uL16.